A 759-amino-acid chain; its full sequence is Tripartite motif-containing protein 46 (759 aa).

A required for proximal axon localization, axon formation and migration region spans residues 1-166 (MAEGEDMQTF…VERYRQSVSV (166 aa)). An RING-type 1; degenerate zinc finger spans residues 33 to 59 (CPVCQEMYKQPLVLPCTHNVCQACARE). Residues 67–98 (IGHGGDPSSEPTSPASTPSTRSPRLSRRTLPK) are disordered. Residues 73 to 89 (PSSEPTSPASTPSTRSP) show a composition bias toward low complexity. The segment at 172-231 (CQLCKPPPLEATKGCSECRATFCNECFKLFHPWGTQKAQHEPTLPTLSFRPKGLMCPDHK) adopts an RING-type 2; degenerate zinc-finger fold. Residues 222–263 (PKGLMCPDHKEEVTHYCKTCQRLVCQLCRVRRTHSGHKITPV) form a B box-type zinc finger. Zn(2+) is bound by residues C227, H230, C249, and H255. Residues 294–400 (ELEETIRHTE…RATEALQTFR (107 aa)) adopt a coiled-coil conformation. S330 is subject to Phosphoserine. Positions 370–427 (LKETDQPCFVQAAKQLHNRIARATEALQTFRPAASSSFRHCQLDVGREMKLLTELNFL) constitute a COS domain. The segment at 411–429 (QLDVGREMKLLTELNFLRV) is required for microtubule association, proximal axon localization and axon formation. Positions 429-528 (VPEAPVIDTQ…EDVHLHTPPA (100 aa)) constitute a Fibronectin type-III domain. The B30.2/SPRY domain occupies 513-747 (GYGEYSEDVH…LQEPVGTKPE (235 aa)). Position 627 is a phosphoserine (S627).

Belongs to the TRIM/RBCC family. As to quaternary structure, interacts with TUBB3 and TUBA4A. In terms of tissue distribution, expressed in primary hippocampal and cortical neurons.

It is found in the cell projection. The protein localises to the axon. Its subcellular location is the cytoplasm. It localises to the cytoskeleton. Microtubule-associated protein that is involved in the formation of parallel microtubule bundles linked by cross-bridges in the proximal axon. Required for the uniform orientation and maintenance of the parallel microtubule fascicles, which are important for efficient cargo delivery and trafficking in axons. Thereby also required for proper axon specification, the establishment of neuronal polarity and proper neuronal migration. The protein is Tripartite motif-containing protein 46 of Rattus norvegicus (Rat).